We begin with the raw amino-acid sequence, 488 residues long: Monodehydroascorbate reductase 4, peroxisomal (488 aa).

The Cytoplasmic segment spans residues 1–3; that stretch reads MGR. The chain crosses the membrane as a helical span at residues 4–24; the sequence is AFVYVILGGGVAAGYAALEFT. Residues 12–15, glutamate 39, arginine 46, lysine 51, and 145–146 contribute to the FAD site; these read GGVA and RD. At 25–458 the chain is on the peroxisomal side; sequence RRGVSDGELC…SASVVMIKKP (434 aa). NAD(+) contacts are provided by residues 170–176, glutamate 194, arginine 200, and glycine 259; that span reads GGYIGME. 172–176 lines the NADP(+) pocket; it reads YIGME. NADP(+) is bound by residues arginine 200 and glycine 259. Aspartate 296 lines the FAD pocket. 312 to 313 provides a ligand contact to NAD(+); sequence EH. Position 312–313 (312–313) interacts with NADP(+); that stretch reads EH. Valine 314 is an FAD binding site. Arginine 318 is an L-ascorbate binding site. Residue tyrosine 344 coordinates FAD. Residue tyrosine 344 coordinates NAD(+). Position 344 (tyrosine 344) interacts with NADP(+). Arginine 346 is a binding site for L-ascorbate. The chain crosses the membrane as a helical span at residues 459 to 479; it reads LYVWHAATGVVVAASVAAFAF. Over 480–488 the chain is Cytoplasmic; that stretch reads WYGRRRRRW.

Belongs to the FAD-dependent oxidoreductase family. FAD is required as a cofactor.

It is found in the peroxisome membrane. The catalysed reaction is 2 monodehydro-L-ascorbate radical + NADH + H(+) = 2 L-ascorbate + NAD(+). Catalyzes the conversion of monodehydroascorbate to ascorbate, oxidizing NADH in the process. Involved in the detoxification of H(2)O(2) that escapes the peroxisome and causes oxidative damage to oil bodies. The protein is Monodehydroascorbate reductase 4, peroxisomal of Arabidopsis thaliana (Mouse-ear cress).